The sequence spans 616 residues: Dihydroxy-acid dehydratase (616 aa).

Residue aspartate 81 participates in Mg(2+) binding. Cysteine 122 provides a ligand contact to [2Fe-2S] cluster. Mg(2+) contacts are provided by aspartate 123 and lysine 124. Lysine 124 carries the N6-carboxylysine modification. Cysteine 195 provides a ligand contact to [2Fe-2S] cluster. Residue glutamate 491 participates in Mg(2+) binding. The Proton acceptor role is filled by serine 517.

This sequence belongs to the IlvD/Edd family. In terms of assembly, homodimer. [2Fe-2S] cluster serves as cofactor. It depends on Mg(2+) as a cofactor.

The catalysed reaction is (2R)-2,3-dihydroxy-3-methylbutanoate = 3-methyl-2-oxobutanoate + H2O. It carries out the reaction (2R,3R)-2,3-dihydroxy-3-methylpentanoate = (S)-3-methyl-2-oxopentanoate + H2O. Its pathway is amino-acid biosynthesis; L-isoleucine biosynthesis; L-isoleucine from 2-oxobutanoate: step 3/4. The protein operates within amino-acid biosynthesis; L-valine biosynthesis; L-valine from pyruvate: step 3/4. Functionally, functions in the biosynthesis of branched-chain amino acids. Catalyzes the dehydration of (2R,3R)-2,3-dihydroxy-3-methylpentanoate (2,3-dihydroxy-3-methylvalerate) into 2-oxo-3-methylpentanoate (2-oxo-3-methylvalerate) and of (2R)-2,3-dihydroxy-3-methylbutanoate (2,3-dihydroxyisovalerate) into 2-oxo-3-methylbutanoate (2-oxoisovalerate), the penultimate precursor to L-isoleucine and L-valine, respectively. The polypeptide is Dihydroxy-acid dehydratase (Escherichia coli O1:K1 / APEC).